The primary structure comprises 274 residues: Pyrroline-5-carboxylate reductase 3 (274 aa).

Residue A2 is modified to N-acetylalanine.

The protein belongs to the pyrroline-5-carboxylate reductase family. As to quaternary structure, homodecamer; composed of 5 homodimers.

The protein localises to the cytoplasm. The catalysed reaction is L-proline + NADP(+) = (S)-1-pyrroline-5-carboxylate + NADPH + 2 H(+). It carries out the reaction L-proline + NAD(+) = (S)-1-pyrroline-5-carboxylate + NADH + 2 H(+). Its pathway is amino-acid biosynthesis; L-proline biosynthesis; L-proline from L-glutamate 5-semialdehyde: step 1/1. In terms of biological role, oxidoreductase that catalyzes the last step in proline biosynthesis, which corresponds to the reduction of pyrroline-5-carboxylate (P5C) to L-proline using NAD(P)H. Proline is synthesized from either glutamate or ornithine; both are converted to P5C, and then to proline via pyrroline-5-carboxylate reductases (PYCRs). PYCR3 is exclusively linked to the biosynthesis of proline from ornithine. The chain is Pyrroline-5-carboxylate reductase 3 from Rattus norvegicus (Rat).